Consider the following 166-residue polypeptide: Phosphopantetheine adenylyltransferase (166 aa).

Ser-8 is a binding site for substrate. Residues 8-9 and His-16 contribute to the ATP site; that span reads SF. Substrate contacts are provided by Lys-40, Thr-72, and Arg-86. ATP is bound by residues 87–89, Glu-97, and 122–128; these read GLR and HSFLSSS.

It belongs to the bacterial CoaD family. In terms of assembly, homohexamer. Mg(2+) is required as a cofactor.

The protein resides in the cytoplasm. The catalysed reaction is (R)-4'-phosphopantetheine + ATP + H(+) = 3'-dephospho-CoA + diphosphate. It functions in the pathway cofactor biosynthesis; coenzyme A biosynthesis; CoA from (R)-pantothenate: step 4/5. Reversibly transfers an adenylyl group from ATP to 4'-phosphopantetheine, yielding dephospho-CoA (dPCoA) and pyrophosphate. This chain is Phosphopantetheine adenylyltransferase, found in Synechococcus sp. (strain RCC307).